Reading from the N-terminus, the 181-residue chain is Secreted chorismate mutase (181 aa).

The signal sequence occupies residues 1–20 (MLASVALAALAGVGTPHATA). Residues 21–100 (DDASPLVPLV…ATSSVEHTRF (80 aa)) enclose the Chorismate mutase domain. Residues Arg-36, Lys-47, Asp-56, 59 to 63 (REQQV), 92 to 96 (TSSVE), and Arg-121 contribute to the substrate site. Cysteines 147 and 180 form a disulfide.

As to quaternary structure, homodimer.

It is found in the secreted. It carries out the reaction chorismate = prephenate. Its pathway is metabolic intermediate biosynthesis; prephenate biosynthesis; prephenate from chorismate: step 1/1. Its function is as follows. Catalyzes the Claisen rearrangement of chorismate to prephenate. May play some role in the pathogenicity. In Mycolicibacterium smegmatis (strain ATCC 700084 / mc(2)155) (Mycobacterium smegmatis), this protein is Secreted chorismate mutase.